The following is a 455-amino-acid chain: UDP-N-acetylmuramate--L-alanine ligase (455 aa).

Residue 109 to 115 (GTHGKTT) participates in ATP binding.

Belongs to the MurCDEF family.

Its subcellular location is the cytoplasm. It catalyses the reaction UDP-N-acetyl-alpha-D-muramate + L-alanine + ATP = UDP-N-acetyl-alpha-D-muramoyl-L-alanine + ADP + phosphate + H(+). Its pathway is cell wall biogenesis; peptidoglycan biosynthesis. In terms of biological role, cell wall formation. The protein is UDP-N-acetylmuramate--L-alanine ligase of Caldicellulosiruptor bescii (strain ATCC BAA-1888 / DSM 6725 / KCTC 15123 / Z-1320) (Anaerocellum thermophilum).